We begin with the raw amino-acid sequence, 1130 residues long: MHC class II transactivator (1130 aa).

The tract at residues 94–132 (AYANIAELDQYVFQDSQLEGLSKDIFKHIGPDEVIGESM) is required for acetyltransferase activity. The disordered stretch occupies residues 269–303 (PSGFTVHGLPTSPDRPGSTSPFAPSATDLPSMPEP). One can recognise an NACHT domain in the interval 414–724 (RVIAVLGKAG…CFLGALWLAL (311 aa)). A GTP-binding site is contributed by 420 to 427 (GKAGQGKS). LRR repeat units lie at residues 985–1008 (SLQH…SQLS), 1016–1037 (SLET…KLAE), 1045–1066 (SLLR…SLAR), and 1073–1093 (SLRV…QQLA).

As to quaternary structure, interacts with ZXDA and ZXDC. Interacts with PML (isoform PML-2). Interacts with TAF7; interaction inhibits CIITA acetyltransferase activity, thereby repressing transcription. In terms of processing, autophosphorylated, affecting interaction with TAF7.

The protein localises to the nucleus. The protein resides in the PML body. It catalyses the reaction L-seryl-[protein] + ATP = O-phospho-L-seryl-[protein] + ADP + H(+). The enzyme catalyses L-threonyl-[protein] + ATP = O-phospho-L-threonyl-[protein] + ADP + H(+). Functionally, essential for transcriptional activity of the HLA class II promoter; activation is via the proximal promoter. Does not bind DNA. May act in a coactivator-like fashion through protein-protein interactions by contacting factors binding to the proximal MHC class II promoter, to elements of the transcription machinery, or both PubMed:8402893, PubMed:7749984,. Alternatively it may activate HLA class II transcription by modifying proteins that bind to the MHC class II promoter. Also mediates enhanced MHC class I transcription; the promoter element requirements for CIITA-mediated transcription are distinct from those of constitutive MHC class I transcription, and CIITA can functionally replace TAF1 at these genes. Activates CD74 transcription. Exhibits intrinsic GTP-stimulated acetyltransferase activity. Exhibits serine/threonine protein kinase activity: can phosphorylate the TFIID component TAF7, the RAP74 subunit of the general transcription factor TFIIF, histone H2B at 'Ser-37' and other histones (in vitro). Has antiviral activity against Ebola virus and coronaviruses, including SARS-CoV-2. Induces resistance by up-regulation of the p41 isoform of CD74, which blocks cathepsin-mediated cleavage of viral glycoproteins, thereby preventing viral fusion. Exhibits dominant-negative suppression of MHC class II gene expression. The chain is MHC class II transactivator from Homo sapiens (Human).